The chain runs to 351 residues: Tropomodulin-2 (351 aa).

Serine 25 is modified (phosphoserine).

It belongs to the tropomodulin family. In terms of assembly, binds to the N-terminus of tropomyosin and to actin. Neuronal-tissue specific.

It is found in the cytoplasm. The protein localises to the cytoskeleton. Its function is as follows. Blocks the elongation and depolymerization of the actin filaments at the pointed end. The Tmod/TM complex contributes to the formation of the short actin protofilament, which in turn defines the geometry of the membrane skeleton. The chain is Tropomodulin-2 (TMOD2) from Homo sapiens (Human).